The primary structure comprises 345 residues: 4-hydroxy-2-oxovalerate aldolase 3 (345 aa).

The Pyruvate carboxyltransferase domain occupies 8-260; it reads ITVHDMTLRD…ETGVDVWKIQ (253 aa). 16–17 is a binding site for substrate; that stretch reads RD. Asp-17 lines the Mn(2+) pocket. His-20 serves as the catalytic Proton acceptor. Substrate is bound by residues Ser-170 and His-199. Mn(2+)-binding residues include His-199 and His-201. Tyr-290 is a substrate binding site.

The protein belongs to the 4-hydroxy-2-oxovalerate aldolase family.

The catalysed reaction is (S)-4-hydroxy-2-oxopentanoate = acetaldehyde + pyruvate. This chain is 4-hydroxy-2-oxovalerate aldolase 3 (aphG), found in Comamonas testosteroni (Pseudomonas testosteroni).